The sequence spans 250 residues: UPF0259 membrane protein bbp_256 (250 aa).

The next 6 helical transmembrane spans lie at 21–41 (PIIV…DSII), 86–106 (FSLL…IQMT), 125–145 (FFKL…GFLL), 146–166 (YFIP…ILLI), 188–208 (IIVP…LIIS), and 216–236 (FLAY…LIIY).

The protein belongs to the UPF0259 family.

It localises to the cell membrane. This is UPF0259 membrane protein bbp_256 from Buchnera aphidicola subsp. Baizongia pistaciae (strain Bp).